The primary structure comprises 202 residues: Dephospho-CoA kinase (202 aa).

In terms of domain architecture, DPCK spans 5–202 (IVGLTGGIAS…DADYRARANP (198 aa)). 13-18 (ASGKSA) is an ATP binding site.

It belongs to the CoaE family.

It is found in the cytoplasm. It carries out the reaction 3'-dephospho-CoA + ATP = ADP + CoA + H(+). Its pathway is cofactor biosynthesis; coenzyme A biosynthesis; CoA from (R)-pantothenate: step 5/5. In terms of biological role, catalyzes the phosphorylation of the 3'-hydroxyl group of dephosphocoenzyme A to form coenzyme A. The chain is Dephospho-CoA kinase from Xanthomonas axonopodis pv. citri (strain 306).